A 499-amino-acid polypeptide reads, in one-letter code: Probable inactive receptor-like protein kinase At3g56050 (499 aa).

An N-terminal signal peptide occupies residues methionine 1–serine 31. An N-linked (GlcNAc...) asparagine glycan is attached at asparagine 14. The Extracellular portion of the chain corresponds to leucine 32–proline 146. A disordered region spans residues arginine 80–proline 121. Asparagine 142 carries N-linked (GlcNAc...) asparagine glycosylation. Residues isoleucine 147–phenylalanine 167 traverse the membrane as a helical segment. Topologically, residues phenylalanine 168–alanine 499 are cytoplasmic. The 267-residue stretch at glutamate 208–threonine 474 folds into the Protein kinase domain.

It localises to the cell membrane. This chain is Probable inactive receptor-like protein kinase At3g56050, found in Arabidopsis thaliana (Mouse-ear cress).